The sequence spans 208 residues: Histone H1t (208 aa).

The span at 1–12 shows a compositional bias: polar residues; the sequence is MSETAPAASSTL. Residues 1–39 are disordered; that stretch reads MSETAPAASSTLVPAPVEKPSSKRRGKKPGLAPARKPRG. The residue at position 9 (Ser-9) is a Phosphoserine. One can recognise an H15 domain in the interval 38–111; the sequence is RGFSVSKLIP…GASGSFKLSK (74 aa). Position 56 is a citrulline (Arg-56). A disordered region spans residues 95–208; the sequence is LVQTKGTGAS…TDLRKAAGRK (114 aa). The span at 121-134 shows a compositional bias: basic residues; the sequence is KGKKSASAKAKKMG. Position 141 is a phosphoserine (Ser-141). Basic residues predominate over residues 143–154; the sequence is KSSKTKAVKKPK. Thr-156 is subject to Phosphothreonine. A phosphoserine mark is found at Ser-163 and Ser-178. Residues 199–208 are compositionally biased toward basic and acidic residues; the sequence is TDLRKAAGRK.

The protein belongs to the histone H1/H5 family. Phosphorylated in early spermatids. Post-translationally, citrullination at Arg-56 (H1R54ci) by PADI4 takes place within the DNA-binding site of H1 and results in its displacement from chromatin and global chromatin decondensation, thereby promoting pluripotency and stem cell maintenance. As to expression, testis-specific.

The protein resides in the nucleus. It is found in the chromosome. In terms of biological role, testis-specific histone H1 that forms less compacted chromatin compared to other H1 histone subtypes. Formation of more relaxed chromatin may be required to promote chromatin architecture required for proper chromosome regulation during meiosis, such as homologous recombination. Histones H1 act as linkers that bind to nucleosomes and compact polynucleosomes into a higher-order chromatin configuration. In Mus musculus (Mouse), this protein is Histone H1t.